Here is a 360-residue protein sequence, read N- to C-terminus: Holliday junction branch migration complex subunit RuvB (360 aa).

Residues 4–196 (HEEDLDQAEE…FGFTAHLEFY (193 aa)) form a large ATPase domain (RuvB-L) region. ATP is bound by residues Leu35, Arg36, Gly77, Lys80, Thr81, Thr82, 143–145 (EDF), Arg186, Tyr196, and Arg233. Thr81 is a binding site for Mg(2+). A small ATPAse domain (RuvB-S) region spans residues 197-267 (EPDELDLIVQ…VAQDALDLYE (71 aa)). The interval 270–360 (QLGLDRLDRG…PESDPPLFED (91 aa)) is head domain (RuvB-H). The DNA site is built by Arg306, Arg325, and Arg330.

Belongs to the RuvB family. As to quaternary structure, homohexamer. Forms an RuvA(8)-RuvB(12)-Holliday junction (HJ) complex. HJ DNA is sandwiched between 2 RuvA tetramers; dsDNA enters through RuvA and exits via RuvB. An RuvB hexamer assembles on each DNA strand where it exits the tetramer. Each RuvB hexamer is contacted by two RuvA subunits (via domain III) on 2 adjacent RuvB subunits; this complex drives branch migration. In the full resolvosome a probable DNA-RuvA(4)-RuvB(12)-RuvC(2) complex forms which resolves the HJ.

Its subcellular location is the cytoplasm. It carries out the reaction ATP + H2O = ADP + phosphate + H(+). Functionally, the RuvA-RuvB-RuvC complex processes Holliday junction (HJ) DNA during genetic recombination and DNA repair, while the RuvA-RuvB complex plays an important role in the rescue of blocked DNA replication forks via replication fork reversal (RFR). RuvA specifically binds to HJ cruciform DNA, conferring on it an open structure. The RuvB hexamer acts as an ATP-dependent pump, pulling dsDNA into and through the RuvAB complex. RuvB forms 2 homohexamers on either side of HJ DNA bound by 1 or 2 RuvA tetramers; 4 subunits per hexamer contact DNA at a time. Coordinated motions by a converter formed by DNA-disengaged RuvB subunits stimulates ATP hydrolysis and nucleotide exchange. Immobilization of the converter enables RuvB to convert the ATP-contained energy into a lever motion, pulling 2 nucleotides of DNA out of the RuvA tetramer per ATP hydrolyzed, thus driving DNA branch migration. The RuvB motors rotate together with the DNA substrate, which together with the progressing nucleotide cycle form the mechanistic basis for DNA recombination by continuous HJ branch migration. Branch migration allows RuvC to scan DNA until it finds its consensus sequence, where it cleaves and resolves cruciform DNA. The protein is Holliday junction branch migration complex subunit RuvB of Nocardioides sp. (strain ATCC BAA-499 / JS614).